Here is a 164-residue protein sequence, read N- to C-terminus: Transcriptional regulator MraZ (164 aa).

SpoVT-AbrB domains are found at residues 7-57 (THQN…TVGA) and 86-129 (AYPL…NPEA). Positions 133–164 (RRQAARSRARTLATSRRPASAPAAGNTAGAAE) are disordered. Positions 142-164 (RTLATSRRPASAPAAGNTAGAAE) are enriched in low complexity.

Belongs to the MraZ family. As to quaternary structure, forms oligomers.

The protein resides in the cytoplasm. Its subcellular location is the nucleoid. In Gluconobacter oxydans (strain 621H) (Gluconobacter suboxydans), this protein is Transcriptional regulator MraZ.